The following is a 501-amino-acid chain: ATP synthase subunit alpha (501 aa).

An ATP-binding site is contributed by Gly-169–Thr-176.

The protein belongs to the ATPase alpha/beta chains family. In terms of assembly, F-type ATPases have 2 components, CF(1) - the catalytic core - and CF(0) - the membrane proton channel. CF(1) has five subunits: alpha(3), beta(3), gamma(1), delta(1), epsilon(1). CF(0) has three main subunits: a(1), b(2) and c(9-12). The alpha and beta chains form an alternating ring which encloses part of the gamma chain. CF(1) is attached to CF(0) by a central stalk formed by the gamma and epsilon chains, while a peripheral stalk is formed by the delta and b chains.

It localises to the cell membrane. It carries out the reaction ATP + H2O + 4 H(+)(in) = ADP + phosphate + 5 H(+)(out). Its function is as follows. Produces ATP from ADP in the presence of a proton gradient across the membrane. The alpha chain is a regulatory subunit. The polypeptide is ATP synthase subunit alpha (Streptococcus equi subsp. zooepidemicus (strain H70)).